The primary structure comprises 240 residues: UDP-2,3-diacylglucosamine hydrolase (240 aa).

Mn(2+)-binding residues include Asp8, His10, Asp41, Asn79, and His114. 79 to 80 serves as a coordination point for substrate; sequence NR. Substrate is bound by residues Asp122, Ser160, Asn164, Lys167, and His195. Mn(2+)-binding residues include His195 and His197.

Belongs to the LpxH family. It depends on Mn(2+) as a cofactor.

Its subcellular location is the cell inner membrane. The catalysed reaction is UDP-2-N,3-O-bis[(3R)-3-hydroxytetradecanoyl]-alpha-D-glucosamine + H2O = 2-N,3-O-bis[(3R)-3-hydroxytetradecanoyl]-alpha-D-glucosaminyl 1-phosphate + UMP + 2 H(+). It participates in glycolipid biosynthesis; lipid IV(A) biosynthesis; lipid IV(A) from (3R)-3-hydroxytetradecanoyl-[acyl-carrier-protein] and UDP-N-acetyl-alpha-D-glucosamine: step 4/6. In terms of biological role, hydrolyzes the pyrophosphate bond of UDP-2,3-diacylglucosamine to yield 2,3-diacylglucosamine 1-phosphate (lipid X) and UMP by catalyzing the attack of water at the alpha-P atom. Involved in the biosynthesis of lipid A, a phosphorylated glycolipid that anchors the lipopolysaccharide to the outer membrane of the cell. The sequence is that of UDP-2,3-diacylglucosamine hydrolase from Shigella boydii serotype 18 (strain CDC 3083-94 / BS512).